A 379-amino-acid chain; its full sequence is 1-deoxy-D-xylulose 5-phosphate reductoisomerase (379 aa).

NADPH-binding residues include Thr10, Gly11, Ser12, Ile13, Asn39, and Asn121. Lys122 provides a ligand contact to 1-deoxy-D-xylulose 5-phosphate. NADPH is bound at residue Glu123. Asp147 contributes to the Mn(2+) binding site. 1-deoxy-D-xylulose 5-phosphate contacts are provided by Ser148, Glu149, Ser173, and His196. Position 149 (Glu149) interacts with Mn(2+). An NADPH-binding site is contributed by Gly202. 4 residues coordinate 1-deoxy-D-xylulose 5-phosphate: Ser209, Asn214, Lys215, and Glu218. A Mn(2+)-binding site is contributed by Glu218.

Belongs to the DXR family. Mg(2+) serves as cofactor. It depends on Mn(2+) as a cofactor.

The catalysed reaction is 2-C-methyl-D-erythritol 4-phosphate + NADP(+) = 1-deoxy-D-xylulose 5-phosphate + NADPH + H(+). It participates in isoprenoid biosynthesis; isopentenyl diphosphate biosynthesis via DXP pathway; isopentenyl diphosphate from 1-deoxy-D-xylulose 5-phosphate: step 1/6. Catalyzes the NADPH-dependent rearrangement and reduction of 1-deoxy-D-xylulose-5-phosphate (DXP) to 2-C-methyl-D-erythritol 4-phosphate (MEP). This chain is 1-deoxy-D-xylulose 5-phosphate reductoisomerase, found in Chlamydia caviae (strain ATCC VR-813 / DSM 19441 / 03DC25 / GPIC) (Chlamydophila caviae).